We begin with the raw amino-acid sequence, 558 residues long: Glucose-6-phosphate isomerase (558 aa).

Glutamate 362 functions as the Proton donor in the catalytic mechanism. Residues histidine 393 and lysine 523 contribute to the active site.

The protein belongs to the GPI family.

Its subcellular location is the cytoplasm. It carries out the reaction alpha-D-glucose 6-phosphate = beta-D-fructose 6-phosphate. It participates in carbohydrate degradation; glycolysis; D-glyceraldehyde 3-phosphate and glycerone phosphate from D-glucose: step 2/4. In Drosophila simulans (Fruit fly), this protein is Glucose-6-phosphate isomerase (Pgi).